Reading from the N-terminus, the 702-residue chain is Polyribonucleotide nucleotidyltransferase 2 (702 aa).

The Mg(2+) site is built by Asp-483 and Asp-489. One can recognise a KH domain in the interval 550-609 (PQVTKLKVHPDKVREVIGAGGKVINKIIDETGVKINIENDGTIYIAAPDQESARVALEMI). Residues 619–687 (GEVYTGKVIK…PQGKIGLSRK (69 aa)) enclose the S1 motif domain.

This sequence belongs to the polyribonucleotide nucleotidyltransferase family. Requires Mg(2+) as cofactor.

The protein resides in the cytoplasm. It carries out the reaction RNA(n+1) + phosphate = RNA(n) + a ribonucleoside 5'-diphosphate. Involved in mRNA degradation. Catalyzes the phosphorolysis of single-stranded polyribonucleotides processively in the 3'- to 5'-direction. The chain is Polyribonucleotide nucleotidyltransferase 2 from Alkaliphilus metalliredigens (strain QYMF).